Consider the following 146-residue polypeptide: Large ribosomal subunit protein bL19 (146 aa).

Belongs to the bacterial ribosomal protein bL19 family.

Functionally, this protein is located at the 30S-50S ribosomal subunit interface and may play a role in the structure and function of the aminoacyl-tRNA binding site. This is Large ribosomal subunit protein bL19 from Bartonella quintana (strain Toulouse) (Rochalimaea quintana).